Consider the following 1383-residue polypeptide: DNA-directed RNA polymerase subunit beta (1383 aa).

It belongs to the RNA polymerase beta chain family. As to quaternary structure, the RNAP catalytic core consists of 2 alpha, 1 beta, 1 beta' and 1 omega subunit. When a sigma factor is associated with the core the holoenzyme is formed, which can initiate transcription.

The enzyme catalyses RNA(n) + a ribonucleoside 5'-triphosphate = RNA(n+1) + diphosphate. Functionally, DNA-dependent RNA polymerase catalyzes the transcription of DNA into RNA using the four ribonucleoside triphosphates as substrates. The chain is DNA-directed RNA polymerase subunit beta from Anaplasma phagocytophilum (strain HZ).